Here is a 628-residue protein sequence, read N- to C-terminus: Glutamine--fructose-6-phosphate aminotransferase [isomerizing] (628 aa).

The active-site Nucleophile; for GATase activity is Cys-2. The Glutamine amidotransferase type-2 domain occupies 2-229; it reads CGIVGYVGHR…QDQAVVLTAD (228 aa). Residues 61–94 form a disordered region; sequence ETDSNDGDGLGGSTGLGHTRWATHGRPTDRNAHP. SIS domains lie at 301 to 440 and 473 to 618; these read SDQE…ARGT and LAER…VDKP. Lys-623 functions as the For Fru-6P isomerization activity in the catalytic mechanism.

Homodimer.

The protein localises to the cytoplasm. The catalysed reaction is D-fructose 6-phosphate + L-glutamine = D-glucosamine 6-phosphate + L-glutamate. Functionally, catalyzes the first step in hexosamine metabolism, converting fructose-6P into glucosamine-6P using glutamine as a nitrogen source. The protein is Glutamine--fructose-6-phosphate aminotransferase [isomerizing] of Mycolicibacterium smegmatis (strain ATCC 700084 / mc(2)155) (Mycobacterium smegmatis).